The primary structure comprises 379 residues: UDP-4-amino-4-deoxy-L-arabinose--oxoglutarate aminotransferase (379 aa).

At K183 the chain carries N6-(pyridoxal phosphate)lysine.

It belongs to the DegT/DnrJ/EryC1 family. ArnB subfamily. Homodimer. The cofactor is pyridoxal 5'-phosphate.

It catalyses the reaction UDP-4-amino-4-deoxy-beta-L-arabinose + 2-oxoglutarate = UDP-beta-L-threo-pentopyranos-4-ulose + L-glutamate. The protein operates within nucleotide-sugar biosynthesis; UDP-4-deoxy-4-formamido-beta-L-arabinose biosynthesis; UDP-4-deoxy-4-formamido-beta-L-arabinose from UDP-alpha-D-glucuronate: step 2/3. Its pathway is bacterial outer membrane biogenesis; lipopolysaccharide biosynthesis. In terms of biological role, catalyzes the conversion of UDP-4-keto-arabinose (UDP-Ara4O) to UDP-4-amino-4-deoxy-L-arabinose (UDP-L-Ara4N). The modified arabinose is attached to lipid A and is required for resistance to polymyxin and cationic antimicrobial peptides. This chain is UDP-4-amino-4-deoxy-L-arabinose--oxoglutarate aminotransferase, found in Pseudomonas fluorescens (strain ATCC BAA-477 / NRRL B-23932 / Pf-5).